Here is a 235-residue protein sequence, read N- to C-terminus: Lipoprotein signal peptidase (235 aa).

The disordered stretch occupies residues 1–23 (MTDETSGPAEPVTDAPGDAESPA). Helical transmembrane passes span 31–51 (LLLT…VLAV), 84–104 (GYTW…IWMG), and 108–128 (VSPW…GNLV). Catalysis depends on residues aspartate 144 and aspartate 158. Residues 156-176 (VADPSVVGGAILLVALSLFGF) traverse the membrane as a helical segment. Residues 185 to 235 (RPGEDAEPSAGASDSTPEAPAADGPDKPAGPVGPEDAAEESKTVGHQAEPS) form a disordered region. Over residues 201–218 (PEAPAADGPDKPAGPVGP) the composition is skewed to low complexity.

It belongs to the peptidase A8 family.

The protein resides in the cell membrane. It carries out the reaction Release of signal peptides from bacterial membrane prolipoproteins. Hydrolyzes -Xaa-Yaa-Zaa-|-(S,diacylglyceryl)Cys-, in which Xaa is hydrophobic (preferably Leu), and Yaa (Ala or Ser) and Zaa (Gly or Ala) have small, neutral side chains.. Its pathway is protein modification; lipoprotein biosynthesis (signal peptide cleavage). Its function is as follows. This protein specifically catalyzes the removal of signal peptides from prolipoproteins. The protein is Lipoprotein signal peptidase of Mycolicibacterium smegmatis (strain ATCC 700084 / mc(2)155) (Mycobacterium smegmatis).